Here is a 211-residue protein sequence, read N- to C-terminus: SAGA-associated factor 11 homolog 1 (211 aa).

An SGF11-type zinc finger spans residues 115–136 (CTCPNCDRLVAAARFAPHLEKC). Positions 149–211 (RRLATKEGSS…GSKKNNGKTF (63 aa)) are disordered. The segment covering 157-166 (SSASTSSTST) has biased composition (low complexity). Phosphoserine is present on S187. Positions 197 to 211 (SSRNNGSKKNNGKTF) are enriched in low complexity.

This sequence belongs to the SGF11 family. Component of some SAGA transcription coactivator-HAT complexes, at least composed of Ada2b, not/nonstop, Pcaf/Gcn5, Sgf11 and Spt3. Within the SAGA complex, Sgf11, e(y)2, and not/nonstop form an additional subcomplex of SAGA called the DUB module (deubiquitination module). Interacts directly with not/nonstop. Interacts with the AMEX complex component xmas-2. Interacts with Cbp80; important for promoter recruitment of Sgf11 that is not associated with the DUB module.

Its subcellular location is the nucleus. The protein localises to the nucleoplasm. The protein resides in the cytoplasm. Component of the transcription regulatory histone acetylation (HAT) complex SAGA, a multiprotein complex that activates transcription by remodeling chromatin and mediating histone acetylation and deubiquitination. Within the SAGA complex, participates in a subcomplex that specifically deubiquitinates histone H2B. The SAGA complex is recruited to specific gene promoters by activators, where it is required for transcription. Required for nuclear receptor-mediated transactivation. Binds independently on SAGA to promoters in an RNA-dependent manner. Binds to mRNA and is essential for total mRNA export from the nucleus. Required to counteract heterochromatin silencing. Controls the development of neuronal connectivity in visual system by being required for accurate axon targeting in the optic lobe. Required for expression of ecdysone-induced genes such as br/broad. In Drosophila grimshawi (Hawaiian fruit fly), this protein is SAGA-associated factor 11 homolog 1.